The sequence spans 167 residues: Ribosome maturation factor RimP (167 aa).

The protein belongs to the RimP family.

It localises to the cytoplasm. Required for maturation of 30S ribosomal subunits. The polypeptide is Ribosome maturation factor RimP (Cytophaga hutchinsonii (strain ATCC 33406 / DSM 1761 / CIP 103989 / NBRC 15051 / NCIMB 9469 / D465)).